A 382-amino-acid chain; its full sequence is Inactive serine protease 54 (382 aa).

A signal peptide spans 1–20 (MAELRGILLLLLYMSHSSSA). The Peptidase S1 domain occupies 29 to 258 (IVDQLHENLV…YSNWIIAKTR (230 aa)). Asn113 is a glycosylation site (N-linked (GlcNAc...) asparagine). 3 cysteine pairs are disulfide-bonded: Cys154–Cys216, Cys185–Cys195, and Cys206–Cys237.

The protein belongs to the peptidase S1 family. Plasma kallikrein subfamily.

It is found in the secreted. This chain is Inactive serine protease 54 (Prss54), found in Rattus norvegicus (Rat).